Here is a 202-residue protein sequence, read N- to C-terminus: uncharacterized protein (202 aa).

An Isoglutamyl lysine isopeptide (Lys-Gln) (interchain with Q-Cter in protein Pup) cross-link involves residue Lys-136.

This is an uncharacterized protein from Mycobacterium tuberculosis (strain CDC 1551 / Oshkosh).